The chain runs to 244 residues: MSDWMPIAKEYDPLKAGSIDGTDEDPHDRAVWRAMLARYVPNKGVTGDPLLTLFVARLNLQTKEEKLKEVFSRYGDIRRLRLVRDLVTGFSKGYAFIEYKEERALMKAYRDADGLVIDQHEIFVDYELERTLRGWIPRRLGGGLGGKKESGQLRFGGRDRPFRKPINLPVVKNEPHREGKRERRERSRSRDRHWDPRPRERDHDRGREKHWQERARVWPENDWEREREFREERVKSRDKRDRSK.

Residues Leu51–Glu129 enclose the RRM domain. Positions Gly146 to Phe162 are enriched in basic and acidic residues. Residues Gly146–Lys244 form a disordered region. Lys172 is covalently cross-linked (Glycyl lysine isopeptide (Lys-Gly) (interchain with G-Cter in SUMO2)). Composition is skewed to basic and acidic residues over residues Asn173–Glu185 and Arg192–Lys244.

Component of the U11/U12 snRNPs that are part of the U12-type spliceosome.

Its subcellular location is the nucleus. This is U11/U12 small nuclear ribonucleoprotein 35 kDa protein (Snrnp35) from Mus musculus (Mouse).